Consider the following 996-residue polypeptide: GPI ethanolamine phosphate transferase 1 (996 aa).

At 1-8 (MAAFPRFR) the chain is on the cytoplasmic side. Residues 9-29 (FLAIAVIFHFAYIFSIFDIYF) form a helical membrane-spanning segment. The Lumenal portion of the chain corresponds to 30–463 (VSPIETGMRL…LQTYDWLFLR (434 aa)). 3 N-linked (GlcNAc...) asparagine glycosylation sites follow: asparagine 47, asparagine 147, and asparagine 210. Residues 464 to 484 (ALITIGYLGWIAYALTTVVDL) form a helical membrane-spanning segment. The Cytoplasmic portion of the chain corresponds to 485–495 (HVLHGRVRPSR). A helical membrane pass occupies residues 496–516 (TLGGGLFFTSVLVALYASLVI). Over 517–518 (SK) the chain is Lumenal. A helical membrane pass occupies residues 519–539 (SPLTYYVYAFFPVFFWEEVYA). Topologically, residues 540 to 560 (HRESLAAGRKELLGHINSGGS) are cytoplasmic. A helical transmembrane segment spans residues 561–581 (VASFVLNSALYVGVIESLALG). Over 582-586 (YIHRE) the chain is Lumenal. A helical membrane pass occupies residues 587–607 (ILSVLFVLGSFWPFTHGLSFL). Over 608–612 (KKHGA) the chain is Cytoplasmic. A helical transmembrane segment spans residues 613 to 633 (LSATWFLACIAMSTFTLLPAM). Residues 634–637 (KAEN) are Lumenal-facing. Residues 638–658 (VNLITIGGVLMVVIGLLYLIF) form a helical membrane-spanning segment. Over 659–681 (EDFVLADFSWNAKPTSRNHLSRS) the chain is Cytoplasmic. The helical transmembrane segment at 682 to 702 (LVGIQVGLTVLSIIITRSSAL) threads the bilayer. The Lumenal segment spans residues 703–715 (SLQAKQGLPRGNQ). Residues 716–734 (IMGWVTLVASLLMPLAYRL) form a helical membrane-spanning segment. At 735 to 754 (RPNNHYMHRILVIFLTCAPT) the chain is on the cytoplasmic side. A helical membrane pass occupies residues 755–775 (FVILTISYEGLFYLVFSALLV). Residues 776 to 822 (SWVRLEHAVQKFTSSKAPQTAATKKPTTTTESHLPAPFRPLTLHDAR) lie on the Lumenal side of the membrane. The chain crosses the membrane as a helical span at residues 823 to 843 (VALFFFILLQSAFFSTGNVAS). At 844–865 (VSSFSLDSVYRLIPIFDPFSQG) the chain is on the cytoplasmic side. A helical membrane pass occupies residues 866 to 886 (AMLILKLMIPFALISANLGIL). Topologically, residues 887–895 (NKRLGVAPS) are lumenal. The chain crosses the membrane as a helical span at residues 896–916 (ALFMVVMGISDILTLYFFWVV). Over 917-932 (KDEGSWLEIGSTISHF) the chain is Cytoplasmic. The chain crosses the membrane as a helical span at residues 933–953 (VIASLLCVFVSALEPVSAAFI). Residues 954 to 996 (AGVEVGEESELKEEGKVAEKVVEKVNEAVEGLVSGGDGGGDES) are Lumenal-facing.

This sequence belongs to the PIGG/PIGN/PIGO family. PIGN subfamily.

It is found in the endoplasmic reticulum membrane. The protein operates within glycolipid biosynthesis; glycosylphosphatidylinositol-anchor biosynthesis. Functionally, ethanolamine phosphate transferase involved in glycosylphosphatidylinositol-anchor biosynthesis. Transfers ethanolamine phosphate to the first alpha-1,4-linked mannose of the glycosylphosphatidylinositol precursor of GPI-anchor. The chain is GPI ethanolamine phosphate transferase 1 (mcd-4) from Neurospora crassa (strain ATCC 24698 / 74-OR23-1A / CBS 708.71 / DSM 1257 / FGSC 987).